The sequence spans 838 residues: Translation initiation factor IF-2 (838 aa).

A disordered region spans residues 1 to 235; sequence MSDTDGKKPL…RSLAAMKREQ (235 aa). Positions 18–27 are enriched in polar residues; it reads SGQVKQSFSH. The span at 50–60 shows a compositional bias: low complexity; the sequence is SGSSTTTSSPS. Residues 88–156 are compositionally biased toward basic and acidic residues; that stretch reads KLREVDDAKR…AARRAEEAKR (69 aa). Positions 162–177 are enriched in low complexity; the sequence is PAAAQPDAADSRASAP. The segment covering 187–208 has biased composition (basic and acidic residues); sequence SRKEREREADRDRTTKKDDSRR. The region spanning 335–509 is the tr-type G domain; that stretch reads PRPPIITIMG…ELLDLRANPK (175 aa). Positions 344 to 351 are G1; that stretch reads GHVDHGKT. Residue 344–351 coordinates GTP; the sequence is GHVDHGKT. The G2 stretch occupies residues 369 to 373; sequence GITQH. The segment at 391–394 is G3; the sequence is DTPG. GTP contacts are provided by residues 391–395 and 445–448; these read DTPGH and NKID. Positions 445–448 are G4; it reads NKID. Residues 481–483 are G5; that stretch reads SAK.

Belongs to the TRAFAC class translation factor GTPase superfamily. Classic translation factor GTPase family. IF-2 subfamily.

The protein localises to the cytoplasm. Its function is as follows. One of the essential components for the initiation of protein synthesis. Protects formylmethionyl-tRNA from spontaneous hydrolysis and promotes its binding to the 30S ribosomal subunits. Also involved in the hydrolysis of GTP during the formation of the 70S ribosomal complex. The polypeptide is Translation initiation factor IF-2 (Cereibacter sphaeroides (strain ATCC 17025 / ATH 2.4.3) (Rhodobacter sphaeroides)).